A 446-amino-acid chain; its full sequence is Glutamine synthetase (446 aa).

One can recognise a GS beta-grasp domain in the interval 18-103; it reads ENVRYLRLQF…LICDVYKTDG (86 aa). One can recognise a GS catalytic domain in the interval 110–446; that stretch reads PRANLKRVLK…WERDQYMKQY (337 aa). Residues Glu134 and Glu136 each coordinate Mg(2+). Position 186 (Glu186) interacts with ATP. Mg(2+)-binding residues include Glu191 and Glu198. L-glutamate-binding positions include 242-243 and Gly243; that span reads NG. His247 contributes to the Mg(2+) binding site. ATP is bound at residue Ser251. L-glutamate is bound by residues Arg300, Glu306, and Arg318. Positions 318 and 323 each coordinate ATP. Glu335 contacts Mg(2+). L-glutamate is bound at residue Arg337.

Belongs to the glutamine synthetase family. As to quaternary structure, oligomer of 12 subunits arranged in the form of two hexagons. In its feedback-inhibited form, interacts with TnrA in order to block its DNA-binding activity. Mg(2+) serves as cofactor.

It localises to the cytoplasm. It carries out the reaction L-glutamate + NH4(+) + ATP = L-glutamine + ADP + phosphate + H(+). With respect to regulation, inhibited by glutamine. Functionally, glutamine synthetase (GS) is an unusual multitasking protein that functions as an enzyme, a transcription coregulator, and a chaperone in ammonium assimilation and in the regulation of genes involved in nitrogen metabolism. It catalyzes the ATP-dependent biosynthesis of glutamine from glutamate and ammonia. Feedback-inhibited GlnA also interacts with and regulates the activity of the transcriptional regulator TnrA. During nitrogen limitation, TnrA is in its DNA-binding active state and turns on the transcription of genes required for nitrogen assimilation. Under conditions of nitrogen excess, feedback-inhibited GlnA forms a stable complex with TnrA, which inhibits its DNA-binding activity. In contrast, feedback-inhibited GlnA acts as a chaperone to stabilize the DNA-binding activity of GlnR, which represses the transcription of nitrogen assimilation genes. The sequence is that of Glutamine synthetase from Staphylococcus aureus (strain MSSA476).